The primary structure comprises 146 residues: Hemoglobin subunit beta (146 aa).

Position 1 is an N-acetylvaline (Val-1). One can recognise a Globin domain in the interval 2–146 (HLTPEEKNAV…VANALAHKYH (145 aa)). Residue Thr-12 is modified to Phosphothreonine. At Ser-44 the chain carries Phosphoserine. Position 59 is an N6-acetyllysine (Lys-59). His-63 provides a ligand contact to heme b. Lys-82 carries the N6-acetyllysine modification. His-92 is a heme b binding site. Residue Cys-93 is modified to S-nitrosocysteine. Lys-144 carries the N6-acetyllysine modification.

The protein belongs to the globin family. In terms of assembly, heterotetramer of two alpha chains and two beta chains. As to expression, red blood cells.

In terms of biological role, involved in oxygen transport from the lung to the various peripheral tissues. This chain is Hemoglobin subunit beta (HBB), found in Theropithecus gelada (Gelada baboon).